A 479-amino-acid polypeptide reads, in one-letter code: UDP-N-acetylmuramoylalanine--D-glutamate ligase (479 aa).

110 to 116 (GTNGKTS) contacts ATP.

Belongs to the MurCDEF family.

Its subcellular location is the cytoplasm. It catalyses the reaction UDP-N-acetyl-alpha-D-muramoyl-L-alanine + D-glutamate + ATP = UDP-N-acetyl-alpha-D-muramoyl-L-alanyl-D-glutamate + ADP + phosphate + H(+). It participates in cell wall biogenesis; peptidoglycan biosynthesis. Cell wall formation. Catalyzes the addition of glutamate to the nucleotide precursor UDP-N-acetylmuramoyl-L-alanine (UMA). The polypeptide is UDP-N-acetylmuramoylalanine--D-glutamate ligase (Bifidobacterium adolescentis (strain ATCC 15703 / DSM 20083 / NCTC 11814 / E194a)).